The sequence spans 891 residues: Bifunctional aldehyde-alcohol dehydrogenase AdhE (891 aa).

The interval Ala2 to Asn440 is aldehyde dehydrogenase. Residues Ile110–Asn115, Gly195, and Gly213 contribute to the NAD(+) site. Cys246 (nucleophile) is an active-site residue. 2 residues coordinate NAD(+): Glu335 and Leu419. Residues Lys441–Ala448 are linker. The interval Glu449–Ala891 is alcohol dehydrogenase. NAD(+) is bound by residues Asp487, Asp519, Gly546 to Asp550, Thr597 to Thr598, Val610, Lys619, and Leu638. The Fe cation site is built by Asp653, His657, His723, and His737.

In the N-terminal section; belongs to the aldehyde dehydrogenase family. It in the C-terminal section; belongs to the iron-containing alcohol dehydrogenase family. As to quaternary structure, forms long filaments, called spirosomes. Fe(2+) is required as a cofactor.

It catalyses the reaction acetaldehyde + NAD(+) + CoA = acetyl-CoA + NADH + H(+). The enzyme catalyses ethanol + NAD(+) = acetaldehyde + NADH + H(+). The catalysed reaction is a primary alcohol + NAD(+) = an aldehyde + NADH + H(+). Under fermentative conditions, catalyzes the sequential NADH-dependent reduction of acetyl-CoA to acetaldehyde and then to ethanol. Plays an important role in virulence and is critical for proper regulation of virulence gene expression. The polypeptide is Bifunctional aldehyde-alcohol dehydrogenase AdhE (Escherichia coli O157:H7).